Here is a 443-residue protein sequence, read N- to C-terminus: Serine--tRNA ligase (443 aa).

Residue 246 to 248 (TAE) coordinates L-serine. 277-279 (RAE) provides a ligand contact to ATP. L-serine is bound at residue E300. 367-370 (EISS) is a binding site for ATP. S402 is an L-serine binding site.

Belongs to the class-II aminoacyl-tRNA synthetase family. Type-1 seryl-tRNA synthetase subfamily. Homodimer. The tRNA molecule binds across the dimer.

The protein resides in the cytoplasm. The catalysed reaction is tRNA(Ser) + L-serine + ATP = L-seryl-tRNA(Ser) + AMP + diphosphate + H(+). It catalyses the reaction tRNA(Sec) + L-serine + ATP = L-seryl-tRNA(Sec) + AMP + diphosphate + H(+). The protein operates within aminoacyl-tRNA biosynthesis; selenocysteinyl-tRNA(Sec) biosynthesis; L-seryl-tRNA(Sec) from L-serine and tRNA(Sec): step 1/1. Functionally, catalyzes the attachment of serine to tRNA(Ser). Is also able to aminoacylate tRNA(Sec) with serine, to form the misacylated tRNA L-seryl-tRNA(Sec), which will be further converted into selenocysteinyl-tRNA(Sec). The protein is Serine--tRNA ligase of Bradyrhizobium diazoefficiens (strain JCM 10833 / BCRC 13528 / IAM 13628 / NBRC 14792 / USDA 110).